Consider the following 316-residue polypeptide: Porphobilinogen deaminase (316 aa).

Cysteine 245 carries the S-(dipyrrolylmethanemethyl)cysteine modification.

This sequence belongs to the HMBS family. In terms of assembly, monomer. Requires dipyrromethane as cofactor.

It catalyses the reaction 4 porphobilinogen + H2O = hydroxymethylbilane + 4 NH4(+). It functions in the pathway porphyrin-containing compound metabolism; protoporphyrin-IX biosynthesis; coproporphyrinogen-III from 5-aminolevulinate: step 2/4. Its pathway is porphyrin-containing compound metabolism; chlorophyll biosynthesis. In terms of biological role, tetrapolymerization of the monopyrrole PBG into the hydroxymethylbilane pre-uroporphyrinogen in several discrete steps. This chain is Porphobilinogen deaminase, found in Synechococcus sp. (strain CC9311).